Here is a 105-residue protein sequence, read N- to C-terminus: Large ribosomal subunit protein uL24 (105 aa).

It belongs to the universal ribosomal protein uL24 family. In terms of assembly, part of the 50S ribosomal subunit.

Its function is as follows. One of two assembly initiator proteins, it binds directly to the 5'-end of the 23S rRNA, where it nucleates assembly of the 50S subunit. One of the proteins that surrounds the polypeptide exit tunnel on the outside of the subunit. The polypeptide is Large ribosomal subunit protein uL24 (Mycolicibacterium vanbaalenii (strain DSM 7251 / JCM 13017 / BCRC 16820 / KCTC 9966 / NRRL B-24157 / PYR-1) (Mycobacterium vanbaalenii)).